Here is a 187-residue protein sequence, read N- to C-terminus: MQTGSFDISELKRRMQGATHALQHELGGLRTGRASSSMLEPVQVDAYGTHMPLIQVATISVPEPRLLSVQVWDKSMIKAVEKAIVDSNLGLSPSTEGQVIRLRIPELNEERRKELVKVAHKYAEAARVAVRHVRRDGLDTLKKLEKNHEISEDDQERLAHDVQKVTDATIQEVDQLLAAKEKEILTV.

Belongs to the RRF family.

The protein localises to the cytoplasm. Responsible for the release of ribosomes from messenger RNA at the termination of protein biosynthesis. May increase the efficiency of translation by recycling ribosomes from one round of translation to another. This is Ribosome-recycling factor from Rhodopseudomonas palustris (strain BisA53).